Here is a 340-residue protein sequence, read N- to C-terminus: Phosphoribosylformylglycinamidine cyclo-ligase (340 aa).

It belongs to the AIR synthase family.

The protein resides in the cytoplasm. It catalyses the reaction 2-formamido-N(1)-(5-O-phospho-beta-D-ribosyl)acetamidine + ATP = 5-amino-1-(5-phospho-beta-D-ribosyl)imidazole + ADP + phosphate + H(+). It functions in the pathway purine metabolism; IMP biosynthesis via de novo pathway; 5-amino-1-(5-phospho-D-ribosyl)imidazole from N(2)-formyl-N(1)-(5-phospho-D-ribosyl)glycinamide: step 2/2. In Streptococcus pyogenes serotype M2 (strain MGAS10270), this protein is Phosphoribosylformylglycinamidine cyclo-ligase.